The sequence spans 429 residues: Glutamate--tRNA ligase 1 (429 aa).

Residues 6–16 (PSPTGDMHIGN) carry the 'HIGH' region motif. The 'KMSKS' region motif lies at 235–239 (KMSKR). Residue Lys-238 participates in ATP binding.

The protein belongs to the class-I aminoacyl-tRNA synthetase family. Glutamate--tRNA ligase type 1 subfamily. As to quaternary structure, monomer.

It localises to the cytoplasm. It catalyses the reaction tRNA(Glu) + L-glutamate + ATP = L-glutamyl-tRNA(Glu) + AMP + diphosphate. In terms of biological role, catalyzes the attachment of glutamate to tRNA(Glu) in a two-step reaction: glutamate is first activated by ATP to form Glu-AMP and then transferred to the acceptor end of tRNA(Glu). The protein is Glutamate--tRNA ligase 1 of Campylobacter fetus subsp. fetus (strain 82-40).